We begin with the raw amino-acid sequence, 52 residues long: uncharacterized protein (52 aa).

Residues 3-46 are a coiled coil; it reads KIQLESSNQSVLKLEERRLNLTAEIERIYGQMDLKRKELENANL.

This is an uncharacterized protein from Dictyostelium discoideum (Social amoeba).